The sequence spans 143 residues: Mannitol-specific phosphotransferase enzyme IIA component (143 aa).

In terms of domain architecture, PTS EIIA type-2 spans 2-142; it reads QVLAKENIKL…EDLIAIFNEV (141 aa). His-62 acts as the Tele-phosphohistidine intermediate in catalysis. His-62 carries the phosphohistidine; by HPr modification. Phosphoserine is present on Ser-74.

It is found in the cytoplasm. In terms of biological role, the phosphoenolpyruvate-dependent sugar phosphotransferase system (sugar PTS), a major carbohydrate active transport system, catalyzes the phosphorylation of incoming sugar substrates concomitantly with their translocation across the cell membrane. The enzyme II CmtAB PTS system is involved in D-mannitol transport. The protein is Mannitol-specific phosphotransferase enzyme IIA component (mtlF) of Bacillus subtilis (strain 168).